The following is a 266-amino-acid chain: Hemin import ATP-binding protein HmuV (266 aa).

The ABC transporter domain occupies 2-242 (IEAVDICVQR…QNLRDVYSCS (241 aa)). 34–41 (GPNGSGKS) provides a ligand contact to ATP.

This sequence belongs to the ABC transporter superfamily. Heme (hemin) importer (TC 3.A.1.14.5) family. As to quaternary structure, the complex is composed of two ATP-binding proteins (HmuV), two transmembrane proteins (HmuU) and a solute-binding protein (HmuT).

The protein localises to the cell inner membrane. Its function is as follows. Part of the ABC transporter complex HmuTUV involved in hemin import. Responsible for energy coupling to the transport system. The polypeptide is Hemin import ATP-binding protein HmuV (Bartonella henselae (strain ATCC 49882 / DSM 28221 / CCUG 30454 / Houston 1) (Rochalimaea henselae)).